We begin with the raw amino-acid sequence, 277 residues long: MGTLSCDPEARLTTVPLARRVADGHIPETGLRKSCGIATLENGSGPGLYVLPSTVGYVNHDCTKAASPAYSLARRPSEAPLQDSSPGPVYFLDPKVTRFGRSCPPAYSMQGRAKVRGLEVTPGPGAYSPEKAPPVRQRNAPAFTLGSRLRQKPPDTSVPAPNAYTMPPLWGSQIFIKPSSPSYTVVGRTPPARPPQDPSEIPGPGQYESPDPNTYRQRRPAFSILGRPRTPRPLEDTPGPGTHNPEQVTVNRARAPAYTMGIRHSKRASTMVGDTKC.

STPGR repeat units follow at residues 122-148 (PGPGAYSPEKAPPVRQRNAPAFTLGSR), 202-227 (PGPGQYESPDPNTYRQRRPAFSILGR), and 238-263 (PGPGTHNPEQVTVNRARAPAYTMGIR). Positions 181–277 (PSYTVVGRTP…ASTMVGDTKC (97 aa)) are disordered.

Belongs to the CIMAP family.

The sequence is that of Protein CIMAP1D (Cimap1d) from Mus musculus (Mouse).